Here is a 95-residue protein sequence, read N- to C-terminus: Defensin alpha 4 (95 aa).

A signal peptide spans 1–19; sequence MRTLALLAAILLVALQAQA. A propeptide spanning residues 20-62 is cleaved from the precursor; it reads EHISVSIDEVVDQQPPQAEDQDVAIYVKEHESSALEALGVKAG. Cystine bridges form between Cys65–Cys93, Cys67–Cys82, and Cys72–Cys92.

It belongs to the alpha-defensin family.

Its subcellular location is the secreted. Its function is as follows. Host-defense peptide that has antimicrobial activity. Inhibits corticotropin (ACTH)-stimulated corticosterone production (in vitro). The chain is Defensin alpha 4 from Oryctolagus cuniculus (Rabbit).